The chain runs to 509 residues: Maturase K (509 aa).

This sequence belongs to the intron maturase 2 family. MatK subfamily.

Its subcellular location is the plastid. It is found in the chloroplast. Functionally, usually encoded in the trnK tRNA gene intron. Probably assists in splicing its own and other chloroplast group II introns. The protein is Maturase K of Solanum lycopersicum (Tomato).